The primary structure comprises 368 residues: Heme A synthase (368 aa).

The next 5 membrane-spanning stretches (helical) occupy residues 14-34 (AVRI…LVGG), 104-124 (VIGI…AIGP), 129-149 (ALWI…WMVA), 161-181 (VRLA…VWTL), and 200-220 (ALAL…VAGL). Residue H264 coordinates heme. A run of 3 helical transmembrane segments spans residues 266–283 (MLAY…IDAL), 296–316 (FLAL…AAPI), and 318–338 (LALV…LQAE). H322 contributes to the heme binding site.

The protein belongs to the COX15/CtaA family. Type 2 subfamily. As to quaternary structure, interacts with CtaB. The cofactor is heme b.

The protein resides in the cell membrane. The catalysed reaction is Fe(II)-heme o + 2 A + H2O = Fe(II)-heme a + 2 AH2. Its pathway is porphyrin-containing compound metabolism; heme A biosynthesis; heme A from heme O: step 1/1. Its function is as follows. Catalyzes the conversion of heme O to heme A by two successive hydroxylations of the methyl group at C8. The first hydroxylation forms heme I, the second hydroxylation results in an unstable dihydroxymethyl group, which spontaneously dehydrates, resulting in the formyl group of heme A. This chain is Heme A synthase, found in Rhodopseudomonas palustris (strain ATCC BAA-98 / CGA009).